We begin with the raw amino-acid sequence, 286 residues long: Protein NipSnap homolog 2 (286 aa).

The N-terminal 23 residues, 1 to 23, are a transit peptide targeting the mitochondrion; the sequence is MAARVLRARGAAWAGGLLQRAAP.

It belongs to the NipSnap family. Interacts with CALCOCO2/NDP52, NBR1, SQSTM1/p62, TAX1BP1 and WDFY3/ALFY. Interacts with ATG8 family proteins (MAP1LC3A, MAP1LC3B, MAP1LC3C, GABARAP, GABARAPL1 and GABARAPL2). Interacts with VDAC1. In terms of tissue distribution, widely expressed. Most abundant in heart and skeletal muscle.

It localises to the mitochondrion matrix. Functionally, protein involved in mitophagy by facilitating recruitment of the autophagy machinery required for clearance of damaged mitochondria. Accumulates on the mitochondria surface in response to mitochondrial depolarization and acts as a 'eat me' signal by recruiting proteins involved in selective autophagy, such as autophagy receptors (CALCOCO2/NDP52, NBR1, SQSTM1/p62, TAX1BP1 and WDFY3/ALFY) and ATG8 family proteins (MAP1LC3A, MAP1LC3B, MAP1LC3C, GABARAP, GABARAPL1 and GABARAPL2). The protein is Protein NipSnap homolog 2 of Homo sapiens (Human).